We begin with the raw amino-acid sequence, 249 residues long: Uridylate kinase (249 aa).

15–18 (KLSG) is a binding site for ATP. The involved in allosteric activation by GTP stretch occupies residues 23–28 (GEEGFG). Residue glycine 57 coordinates UMP. Residues glycine 58 and arginine 62 each coordinate ATP. UMP-binding positions include aspartate 77 and 138–145 (TGNPFFTT). ATP-binding residues include threonine 165, phenylalanine 171, and aspartate 174.

The protein belongs to the UMP kinase family. In terms of assembly, homohexamer.

It is found in the cytoplasm. It carries out the reaction UMP + ATP = UDP + ADP. Its pathway is pyrimidine metabolism; CTP biosynthesis via de novo pathway; UDP from UMP (UMPK route): step 1/1. Allosterically activated by GTP. Inhibited by UTP. In terms of biological role, catalyzes the reversible phosphorylation of UMP to UDP. This is Uridylate kinase from Psychromonas ingrahamii (strain DSM 17664 / CCUG 51855 / 37).